A 453-amino-acid chain; its full sequence is Transcription factor radR (453 aa).

Residues 1–30 (MPNNLQHQEGSYSLRSSNDVSPADDWTQTN) are compositionally biased toward polar residues. A disordered region spans residues 1 to 45 (MPNNLQHQEGSYSLRSSNDVSPADDWTQTNDPKEKKRIQNRVAQR). A bZIP domain is found at 30 to 62 (NDPKEKKRIQNRVAQRTYRNRIRARLEELENKI). The tract at residues 33–50 (KEKKRIQNRVAQRTYRNR) is basic motif. Residues 51–58 (IRARLEEL) are leucine-zipper. The disordered stretch occupies residues 160 to 184 (APRAAQARSIAPTSTGMHQISPSYG). Over residues 170 to 181 (APTSTGMHQISP) the composition is skewed to polar residues.

Belongs to the bZIP family.

Its subcellular location is the nucleus. In terms of biological role, transcription factor that positively regulates the expression of the gene clusters that mediate the biosynthesis of pestheic acid, a diphenyl ether which is a biosynthetic precursor of the unique chloropupukeananes. This chain is Transcription factor radR, found in Floropilus chiversii (Chaetomium chiversii).